A 200-amino-acid chain; its full sequence is AP-5 complex subunit sigma-1 (200 aa).

Probably part of the adaptor protein complex 5 (AP-5) a tetramer composed of AP5B1, AP5M1, AP5S1 and AP5Z1. Interacts with ZFYVE26 and SPG11.

Its subcellular location is the cytoplasm. It localises to the cytosol. It is found in the late endosome membrane. The protein localises to the lysosome membrane. Functionally, as part of AP-5, a probable fifth adaptor protein complex it may be involved in endosomal transport. According to PubMed:20613862, it is required for efficient homologous recombination DNA double-strand break repair. The protein is AP-5 complex subunit sigma-1 (AP5S1) of Homo sapiens (Human).